A 689-amino-acid polypeptide reads, in one-letter code: Glycine--tRNA ligase beta subunit (689 aa).

The protein belongs to the class-II aminoacyl-tRNA synthetase family. Tetramer of two alpha and two beta subunits.

The protein localises to the cytoplasm. The catalysed reaction is tRNA(Gly) + glycine + ATP = glycyl-tRNA(Gly) + AMP + diphosphate. The chain is Glycine--tRNA ligase beta subunit from Pectobacterium atrosepticum (strain SCRI 1043 / ATCC BAA-672) (Erwinia carotovora subsp. atroseptica).